The following is a 1071-amino-acid chain: DNA-directed RNA polymerase subunit beta (1071 aa).

It belongs to the RNA polymerase beta chain family. In plastids the minimal PEP RNA polymerase catalytic core is composed of four subunits: alpha, beta, beta', and beta''. When a (nuclear-encoded) sigma factor is associated with the core the holoenzyme is formed, which can initiate transcription.

The protein resides in the plastid. It is found in the chloroplast. It catalyses the reaction RNA(n) + a ribonucleoside 5'-triphosphate = RNA(n+1) + diphosphate. Functionally, DNA-dependent RNA polymerase catalyzes the transcription of DNA into RNA using the four ribonucleoside triphosphates as substrates. The protein is DNA-directed RNA polymerase subunit beta of Acorus calamus (Sweet flag).